The following is a 131-amino-acid chain: Small ribosomal subunit protein bS6 (131 aa).

Residues 96–131 (VTEASPMVKAKDERRERRDDFANETADDAEAGDSEE) form a disordered region. Residues 104–116 (KAKDERRERRDDF) show a composition bias toward basic and acidic residues. The span at 120 to 131 (TADDAEAGDSEE) shows a compositional bias: acidic residues.

Belongs to the bacterial ribosomal protein bS6 family.

In terms of biological role, binds together with bS18 to 16S ribosomal RNA. This Salmonella arizonae (strain ATCC BAA-731 / CDC346-86 / RSK2980) protein is Small ribosomal subunit protein bS6.